A 285-amino-acid polypeptide reads, in one-letter code: HTH-type transcriptional regulator MurR (285 aa).

The region spanning 1-77 (MLYLTKIRNA…MALIGEYSAS (77 aa)) is the HTH rpiR-type domain. A DNA-binding region (H-T-H motif) is located at residues 37–56 (SRKMAKLLGISQSSIVKFAQ). Residues 128–268 (IIEAISKAPF…FVGLVQLNDV (141 aa)) enclose the SIS domain.

As to quaternary structure, homotetramer.

The protein operates within amino-sugar metabolism; N-acetylmuramate degradation [regulation]. Its function is as follows. Represses the expression of the murPQ operon involved in the uptake and degradation of N-acetylmuramic acid (MurNAc). Binds to two adjacent inverted repeats within the operator region. MurNAc 6-phosphate, the substrate of MurQ, is the specific inducer that weakens binding of MurR to the operator. The chain is HTH-type transcriptional regulator MurR from Escherichia coli O17:K52:H18 (strain UMN026 / ExPEC).